The primary structure comprises 369 residues: Anhydro-N-acetylmuramic acid kinase (369 aa).

An ATP-binding site is contributed by 12–19 (GTSLDGVD).

This sequence belongs to the anhydro-N-acetylmuramic acid kinase family.

It catalyses the reaction 1,6-anhydro-N-acetyl-beta-muramate + ATP + H2O = N-acetyl-D-muramate 6-phosphate + ADP + H(+). The protein operates within amino-sugar metabolism; 1,6-anhydro-N-acetylmuramate degradation. It participates in cell wall biogenesis; peptidoglycan recycling. In terms of biological role, catalyzes the specific phosphorylation of 1,6-anhydro-N-acetylmuramic acid (anhMurNAc) with the simultaneous cleavage of the 1,6-anhydro ring, generating MurNAc-6-P. Is required for the utilization of anhMurNAc either imported from the medium or derived from its own cell wall murein, and thus plays a role in cell wall recycling. The chain is Anhydro-N-acetylmuramic acid kinase from Shigella boydii serotype 4 (strain Sb227).